We begin with the raw amino-acid sequence, 374 residues long: Ribosomal RNA large subunit methyltransferase G (374 aa).

Belongs to the methyltransferase superfamily. RlmG family.

It localises to the cytoplasm. The enzyme catalyses guanosine(1835) in 23S rRNA + S-adenosyl-L-methionine = N(2)-methylguanosine(1835) in 23S rRNA + S-adenosyl-L-homocysteine + H(+). In terms of biological role, specifically methylates the guanine in position 1835 (m2G1835) of 23S rRNA. This Pseudomonas putida (strain ATCC 700007 / DSM 6899 / JCM 31910 / BCRC 17059 / LMG 24140 / F1) protein is Ribosomal RNA large subunit methyltransferase G.